Reading from the N-terminus, the 1311-residue chain is DENN domain-containing protein 5B (1311 aa).

A uDENN domain is found at 53–270; it reads ATAAGENFDQ…EVPLPASGRS (218 aa). Residues 154 to 165 show a composition bias toward polar residues; that stretch reads QAEHNTSAQNCT. A disordered region spans residues 154–201; it reads QAEHNTSAQNCTSSSSSSSSSSSSSSMDSLSSSLDDVDSPSAHGGRRT. Residues 166–187 are compositionally biased toward low complexity; it reads SSSSSSSSSSSSSSMDSLSSSL. Positions 289-452 constitute a cDENN domain; sequence ELPLADFPLA…AVMSLQTSVL (164 aa). Residues 454 to 619 form the dDENN domain; that stretch reads KELKSTSLRE…DNKIMSQWEE (166 aa). Positions 809 to 969 constitute an RUN 1 domain; sequence LEENTLIASL…DYFCFTSVFT (161 aa). A disordered region spans residues 854–874; the sequence is EQQLESPVSNGQERRKTESSV. The helical transmembrane segment at 962–982 threads the bilayer; that stretch reads FCFTSVFTTIMIPYRAVIIPI. One can recognise a PLAT domain in the interval 973–1081; it reads IPYRAVIIPI…DDGSLERVLI (109 aa). Positions 1155–1306 constitute an RUN 2 domain; that stretch reads TVLLCGEGGL…FPITLETSLT (152 aa).

It belongs to the RAB6IP1 family.

The protein localises to the membrane. Its function is as follows. Guanine nucleotide exchange factor (GEF) which may activate the small GTPases Rab. May promote the exchange of GDP to GTP, converting inactive GDP-bound Rab proteins into their active GTP-bound form. The chain is DENN domain-containing protein 5B (dennd5b) from Danio rerio (Zebrafish).